The primary structure comprises 67 residues: Large ribosomal subunit protein bL35 (67 aa).

It belongs to the bacterial ribosomal protein bL35 family.

The protein is Large ribosomal subunit protein bL35 of Agrobacterium fabrum (strain C58 / ATCC 33970) (Agrobacterium tumefaciens (strain C58)).